Consider the following 348-residue polypeptide: Calcium/calmodulin-dependent protein kinase type 1 (348 aa).

A Nuclear localization signal 1 motif is present at residues 7-22 (RDGSGPAPNATIREKY). The 257-residue stretch at 22-278 (YDFRDVLGTG…CQDALSHPWI (257 aa)) folds into the Protein kinase domain. ATP is bound by residues 28–36 (LGTGAFSKV) and lysine 52. Residues 71–78 (KVLRKLRH) carry the Nuclear localization signal 2 motif. Aspartate 144 serves as the catalytic Proton acceptor. Position 179 is a phosphothreonine; by ckk-1 (threonine 179). Residues 278 to 318 (ISGNTAYTHDIHGTVAVHLKKSLAKRNWKKAYNAAAAIRQL) form an autoinhibitory domain region. Positions 288–294 (IHGTVAV) match the Nuclear export sequence motif. The Nuclear localization signal 3 signature appears at 297-307 (KKSLAKRNWKK). The segment at 298–319 (KSLAKRNWKKAYNAAAAIRQLQ) is calmodulin-binding. The span at 327 to 338 (SNRLQKQASQQQ) shows a compositional bias: polar residues. The tract at residues 327–348 (SNRLQKQASQQQPEPPTPAFHA) is disordered. Positions 339 to 348 (PEPPTPAFHA) are enriched in pro residues.

It belongs to the protein kinase superfamily. CAMK Ser/Thr protein kinase family. CaMK subfamily. As to quaternary structure, interacts with importin ima-3; affinity for ima-3 is increased in the presence of Ca(2+) and calmodulin and leads to increased nuclear accumulation of cmk-1 in FLP neurons upon prolonged heat activation. The cofactor is Mg(2+). Phosphorylation at Thr-179 can promote both nuclear export and import, sustaining nucleocytoplasmic shuttling. In terms of tissue distribution, expressed in head and tail neurons and vulval muscles. Throughout the nervous system. Detected in neurites and neuronal cell bodies. Expressed in the mechanosensory neurons, AVM and ALM, and in the interneurons, AVA, AVB and AVD. Expressed in the right and left ASE neurons where it functions cell-autonomously to control salt-avoidance learning. Expressed in FLP and AFD thermosensory neurons.

It localises to the nucleus. The protein resides in the cytoplasm. The enzyme catalyses L-seryl-[protein] + ATP = O-phospho-L-seryl-[protein] + ADP + H(+). The catalysed reaction is L-threonyl-[protein] + ATP = O-phospho-L-threonyl-[protein] + ADP + H(+). With respect to regulation, activated by Ca(2+)/calmodulin. Binding of calmodulin results in a conformational change that generates functional binding sites for both substrate and ATP, and thus relieves autoinhibition and lowers the Km of substrate binding. Must be phosphorylated by ckk-1 to be maximally active but this does not appear to be required for activity in AFD neurons. In terms of biological role, calcium/calmodulin-dependent protein kinase that operates in the calcium-triggered CaMKK-CaMK1 signaling cascade which results in transcriptional activation. Transcriptional activation occurs at least in part through phosphorylation of crh-1. Regulates gene expression, sensory morphology, and function of the AFD thermosensory neurons. Involved in long-term adaptation of AFD neurons to temperatures warmer than the initial acclimatized cultivation temperature. Acts in the FLP thermal nociceptors to moderate the responsiveness to noxious heat and controls neuropeptide release from FLP neurons in response to temperature elevations. Regulates the dauer decision, the decision of the larvae to enter into the alternative stress-resistant and long-lived dauer developmental stage, based on the feeding state, primarily in the AWC sensory neurons. Acts non cell-autonomously in the AWC neurons to regulate expression of the daf-28 insulin-like peptide and cell-autonomously in the ASI sensory neurons to regulate expression of the growth promoting daf-7 in a food-regulated manner. Plays a role in memory-based thermal response of an individual AFD neuron cell. Influences habituation and sensitivity to repeated mechanosensory stimuli. Involved in chemotaxis response in AWC neurons to attractant 2-heptanone, a volatile organic compound emitted by the nematode pathogenic bacterium B.nematocida B16. Acts in the ASE salt-sensing neurons to promote a type of aversive gustatory-associated learning called salt-avoidance learning via regulation of crh-1 signaling and the promotion of long-term memory formation, but is not involved in salt attraction. Represses transcription of glutamate receptor glr-1 in the nucleus basally and in response to changes in synaptic activity. The polypeptide is Calcium/calmodulin-dependent protein kinase type 1 (Caenorhabditis elegans).